The following is a 578-amino-acid chain: Lysine--tRNA ligase (578 aa).

Mg(2+)-binding residues include Glu414 and Glu421.

Belongs to the class-II aminoacyl-tRNA synthetase family. As to quaternary structure, homodimer. It depends on Mg(2+) as a cofactor.

It is found in the cytoplasm. The enzyme catalyses tRNA(Lys) + L-lysine + ATP = L-lysyl-tRNA(Lys) + AMP + diphosphate. The polypeptide is Lysine--tRNA ligase (Porphyromonas gingivalis (strain ATCC 33277 / DSM 20709 / CIP 103683 / JCM 12257 / NCTC 11834 / 2561)).